The following is a 357-amino-acid chain: Alanine racemase (357 aa).

The active-site Proton acceptor; specific for D-alanine is K33. Residue K33 is modified to N6-(pyridoxal phosphate)lysine. Position 129 (R129) interacts with substrate. Y253 acts as the Proton acceptor; specific for L-alanine in catalysis. M301 is a binding site for substrate.

This sequence belongs to the alanine racemase family. Pyridoxal 5'-phosphate serves as cofactor.

The catalysed reaction is L-alanine = D-alanine. It functions in the pathway amino-acid biosynthesis; D-alanine biosynthesis; D-alanine from L-alanine: step 1/1. Functionally, catalyzes the interconversion of L-alanine and D-alanine. May also act on other amino acids. The polypeptide is Alanine racemase (alr) (Pseudomonas entomophila (strain L48)).